The following is a 303-amino-acid chain: Small ribosomal subunit protein uS2 (303 aa).

Residues 258 to 303 (ATLRENAVVTENEVKKTDEEEGASSEAARADAQNEEAVAKPGEEVE) are disordered. Residues 294–303 (AVAKPGEEVE) are compositionally biased toward basic and acidic residues.

It belongs to the universal ribosomal protein uS2 family.

This is Small ribosomal subunit protein uS2 from Bifidobacterium animalis subsp. lactis (strain AD011).